A 151-amino-acid chain; its full sequence is SsrA-binding protein (151 aa).

A disordered region spans residues 132–151 (KRQTIKKRDQDREIHRKYGI).

Belongs to the SmpB family.

It is found in the cytoplasm. Functionally, required for rescue of stalled ribosomes mediated by trans-translation. Binds to transfer-messenger RNA (tmRNA), required for stable association of tmRNA with ribosomes. tmRNA and SmpB together mimic tRNA shape, replacing the anticodon stem-loop with SmpB. tmRNA is encoded by the ssrA gene; the 2 termini fold to resemble tRNA(Ala) and it encodes a 'tag peptide', a short internal open reading frame. During trans-translation Ala-aminoacylated tmRNA acts like a tRNA, entering the A-site of stalled ribosomes, displacing the stalled mRNA. The ribosome then switches to translate the ORF on the tmRNA; the nascent peptide is terminated with the 'tag peptide' encoded by the tmRNA and targeted for degradation. The ribosome is freed to recommence translation, which seems to be the essential function of trans-translation. The sequence is that of SsrA-binding protein from Lactobacillus johnsonii (strain CNCM I-12250 / La1 / NCC 533).